Consider the following 379-residue polypeptide: DNA replication and repair protein RecF (379 aa).

34–41 contributes to the ATP binding site; it reads GDNGAGKT.

It belongs to the RecF family.

It localises to the cytoplasm. Functionally, the RecF protein is involved in DNA metabolism; it is required for DNA replication and normal SOS inducibility. RecF binds preferentially to single-stranded, linear DNA. It also seems to bind ATP. The protein is DNA replication and repair protein RecF of Mesorhizobium japonicum (strain LMG 29417 / CECT 9101 / MAFF 303099) (Mesorhizobium loti (strain MAFF 303099)).